Consider the following 414-residue polypeptide: Eukaryotic initiation factor 4A-1 (414 aa).

The Q motif signature appears at 41 to 69; sequence ESFDDMGLQENLLRGIYAYGFEKPSAIQQ. The Helicase ATP-binding domain occupies 72-242; the sequence is IVPFCKGLDV…RKFMNKPVRI (171 aa). Residue 85 to 92 participates in ATP binding; it reads AQSGTGKT. The DEAD box motif lies at 190–193; sequence DEAD. Residues 253–414 enclose the Helicase C-terminal domain; the sequence is GIKQFYVNVE…ELPANVADLL (162 aa).

Belongs to the DEAD box helicase family. eIF4A subfamily. As to quaternary structure, eIF4F is a multi-subunit complex, the composition of which varies with external and internal environmental conditions. It is composed of at least EIF4A, EIF4E and EIF4G.

It catalyses the reaction ATP + H2O = ADP + phosphate + H(+). In terms of biological role, ATP-dependent RNA helicase which is a subunit of the eIF4F complex involved in cap recognition and is required for mRNA binding to ribosome. In the current model of translation initiation, eIF4A unwinds RNA secondary structures in the 5'-UTR of mRNAs which is necessary to allow efficient binding of the small ribosomal subunit, and subsequent scanning for the initiator codon. This is Eukaryotic initiation factor 4A-1 from Oryza sativa subsp. japonica (Rice).